A 219-amino-acid polypeptide reads, in one-letter code: Adenylate kinase (219 aa).

ATP is bound at residue 10–15; that stretch reads GAGKGT. The segment at 30–59 is NMP; it reads STGDMLRAAVKAGTPLGQQAKKIMDEGGLV. Residues threonine 31, arginine 36, 57-59, 85-88, and glutamine 92 each bind AMP; these read GLV and GFPR. The tract at residues 122 to 159 is LID; the sequence is GRRVHPGSGRVYHVTHNPPRQEGKDDVTGEDLVQREDD. Residues arginine 123 and 132–133 each bind ATP; that span reads VY. A disordered region spans residues 128–150; that stretch reads GSGRVYHVTHNPPRQEGKDDVTG. The segment covering 140 to 150 has biased composition (basic and acidic residues); it reads PRQEGKDDVTG. AMP-binding residues include arginine 156 and arginine 167. Arginine 203 contributes to the ATP binding site.

This sequence belongs to the adenylate kinase family. In terms of assembly, monomer.

The protein resides in the cytoplasm. It catalyses the reaction AMP + ATP = 2 ADP. It participates in purine metabolism; AMP biosynthesis via salvage pathway; AMP from ADP: step 1/1. In terms of biological role, catalyzes the reversible transfer of the terminal phosphate group between ATP and AMP. Plays an important role in cellular energy homeostasis and in adenine nucleotide metabolism. The protein is Adenylate kinase of Halorhodospira halophila (strain DSM 244 / SL1) (Ectothiorhodospira halophila (strain DSM 244 / SL1)).